Here is an 84-residue protein sequence, read N- to C-terminus: Exodeoxyribonuclease 7 small subunit (84 aa).

It belongs to the XseB family. In terms of assembly, heterooligomer composed of large and small subunits.

The protein resides in the cytoplasm. The catalysed reaction is Exonucleolytic cleavage in either 5'- to 3'- or 3'- to 5'-direction to yield nucleoside 5'-phosphates.. In terms of biological role, bidirectionally degrades single-stranded DNA into large acid-insoluble oligonucleotides, which are then degraded further into small acid-soluble oligonucleotides. The sequence is that of Exodeoxyribonuclease 7 small subunit from Bartonella henselae (strain ATCC 49882 / DSM 28221 / CCUG 30454 / Houston 1) (Rochalimaea henselae).